The following is a 336-amino-acid chain: Ketol-acid reductoisomerase (NADP(+)) (336 aa).

The KARI N-terminal Rossmann domain maps to 1–181 (MKVYYDQDAD…GGGRSGIIET (181 aa)). NADP(+) is bound by residues 24 to 27 (YGSQ), arginine 47, serine 50, and serine 52. Histidine 107 is a catalytic residue. NADP(+) is bound at residue glycine 133. Residues 182 to 327 (SFREETETDL…ERLRGMMPWI (146 aa)) enclose the KARI C-terminal knotted domain. The Mg(2+) site is built by aspartate 190, glutamate 194, glutamate 226, and glutamate 230. Serine 251 serves as a coordination point for substrate.

This sequence belongs to the ketol-acid reductoisomerase family. Mg(2+) serves as cofactor.

It carries out the reaction (2R)-2,3-dihydroxy-3-methylbutanoate + NADP(+) = (2S)-2-acetolactate + NADPH + H(+). The catalysed reaction is (2R,3R)-2,3-dihydroxy-3-methylpentanoate + NADP(+) = (S)-2-ethyl-2-hydroxy-3-oxobutanoate + NADPH + H(+). It functions in the pathway amino-acid biosynthesis; L-isoleucine biosynthesis; L-isoleucine from 2-oxobutanoate: step 2/4. Its pathway is amino-acid biosynthesis; L-valine biosynthesis; L-valine from pyruvate: step 2/4. In terms of biological role, involved in the biosynthesis of branched-chain amino acids (BCAA). Catalyzes an alkyl-migration followed by a ketol-acid reduction of (S)-2-acetolactate (S2AL) to yield (R)-2,3-dihydroxy-isovalerate. In the isomerase reaction, S2AL is rearranged via a Mg-dependent methyl migration to produce 3-hydroxy-3-methyl-2-ketobutyrate (HMKB). In the reductase reaction, this 2-ketoacid undergoes a metal-dependent reduction by NADPH to yield (R)-2,3-dihydroxy-isovalerate. The chain is Ketol-acid reductoisomerase (NADP(+)) from Halorhodospira halophila (strain DSM 244 / SL1) (Ectothiorhodospira halophila (strain DSM 244 / SL1)).